The following is a 634-amino-acid chain: tRNA uridine 5-carboxymethylaminomethyl modification enzyme MnmG (634 aa).

14–19 (GGGHAG) contacts FAD. 279 to 293 (GPRYCPSIEDKVVRF) is an NAD(+) binding site.

It belongs to the MnmG family. In terms of assembly, homodimer. Heterotetramer of two MnmE and two MnmG subunits. Requires FAD as cofactor.

The protein resides in the cytoplasm. Functionally, NAD-binding protein involved in the addition of a carboxymethylaminomethyl (cmnm) group at the wobble position (U34) of certain tRNAs, forming tRNA-cmnm(5)s(2)U34. This Xanthomonas oryzae pv. oryzae (strain KACC10331 / KXO85) protein is tRNA uridine 5-carboxymethylaminomethyl modification enzyme MnmG.